The primary structure comprises 188 residues: Insulin-like peptide INSL6 (188 aa).

Residues 1–22 form the signal peptide; that stretch reads MKQLCCSCLLWLGLLLAPFSQE. 3 disulfides stabilise this stretch: cysteine 33-cysteine 169, cysteine 45-cysteine 182, and cysteine 168-cysteine 173. The propeptide at 53 to 158 is connecting peptide; it reads FSMEEQSPMT…SGLFWGNHPQ (106 aa).

It belongs to the insulin family. Testis and prostate specific.

It localises to the secreted. May have a role in sperm development and fertilization. The sequence is that of Insulin-like peptide INSL6 (Insl6) from Rattus norvegicus (Rat).